Consider the following 808-residue polypeptide: Enhancer of polycomb homolog 2 (808 aa).

Glycyl lysine isopeptide (Lys-Gly) (interchain with G-Cter in SUMO2) cross-links involve residues lysine 135, lysine 195, and lysine 324. The interval 337–357 (YPKKPKAEAGIAPQQPTPETL) is disordered. A Glycyl lysine isopeptide (Lys-Gly) (interchain with G-Cter in SUMO2) cross-link involves residue lysine 362. 3 disordered regions span residues 371 to 397 (QSSD…PDGS), 595 to 630 (QRQQ…CMSK), and 645 to 682 (VSAP…LYST). The span at 595-614 (QRQQLAQLHQKQQSQHSSQQ) shows a compositional bias: low complexity. Polar residues-rich tracts occupy residues 615–630 (THPK…CMSK) and 658–682 (EQNT…LYST). Serine 755 is subject to Phosphoserine.

It belongs to the enhancer of polycomb family.

It is found in the nucleus. In terms of biological role, may play a role in transcription or DNA repair. In Mus musculus (Mouse), this protein is Enhancer of polycomb homolog 2 (Epc2).